We begin with the raw amino-acid sequence, 289 residues long: MKLIILEHYSQASEWAAKYIRNRIIQFNPGPDKYFTLGLPTGSTPLGCYQKLIEYYKNGDLSFQYVKTFNMDEYVGLPRDHPESYHSFMWNNFFKHIDIHPENTHILDGNAADLQAECDAFEEKIQAAGGIELFVGGIGPDGHIAFNEPGSSLVSRTRVKTLAMDTILANARFFDGDLAKVPTMALTVGVGTVMDAKEVMILITGAHKAFALYKAIEEGVNHMWTVSAFQQHPRTVFVCDEDATLELKVKTVKYFKGLMLVHNKLVDPLYSIKEKEIQKSQSAKKPYSD.

The active-site Proton acceptor; for enolization step is the Asp-72. Residue Asp-141 is the For ring-opening step of the active site. The active-site Proton acceptor; for ring-opening step is the His-143. Glu-148 acts as the For ring-opening step in catalysis. At Thr-161 the chain carries Phosphothreonine.

It belongs to the glucosamine/galactosamine-6-phosphate isomerase family. In terms of assembly, homohexamer. As to expression, widely expressed. Detected in brain, liver, kidney, muscle, ovary, testis, spermatids and spermatozoa. In spermatids, located close to the developing acrosome vesicle. In spermatozoa, found close to the acrosomal region.

The protein resides in the cytoplasm. It catalyses the reaction alpha-D-glucosamine 6-phosphate + H2O = beta-D-fructose 6-phosphate + NH4(+). The protein operates within nucleotide-sugar biosynthesis; UDP-N-acetyl-alpha-D-glucosamine biosynthesis; alpha-D-glucosamine 6-phosphate from D-fructose 6-phosphate: step 1/1. Its activity is regulated as follows. Allosterically activated by N-acetylglucosamine-6-phosphate (GlcNAc6P). Functionally, catalyzes the reversible conversion of alpha-D-glucosamine 6-phosphate (GlcN-6P) into beta-D-fructose 6-phosphate (Fru-6P) and ammonium ion, a regulatory reaction step in de novo uridine diphosphate-N-acetyl-alpha-D-glucosamine (UDP-GlcNAc) biosynthesis via hexosamine pathway. Deamination is coupled to aldo-keto isomerization mediating the metabolic flux from UDP-GlcNAc toward Fru-6P. At high ammonium level can drive amination and isomerization of Fru-6P toward hexosamines and UDP-GlcNAc synthesis. Has a role in fine tuning the metabolic fluctuations of cytosolic UDP-GlcNAc and their effects on hyaluronan synthesis that occur during tissue remodeling. Seems to trigger calcium oscillations in mammalian eggs. These oscillations serve as the essential trigger for egg activation and early development of the embryo. The polypeptide is Glucosamine-6-phosphate deaminase 1 (Mus musculus (Mouse)).